Consider the following 113-residue polypeptide: Protein SPIRAL1-like 1 (113 aa).

Residues 1–12 (MGRGVSVGGGQS) are compositionally biased toward gly residues. The disordered stretch occupies residues 1-50 (MGRGVSVGGGQSSLGYLFGSGEAPKPAINNAPAPSSETLPISADPSPKHV). The span at 23-34 (APKPAINNAPAP) shows a compositional bias: low complexity. Serine 69 is subject to Phosphoserine. The interval 79–113 (QNTGNFLTDRPSTKVHAAPGGGSSLDYLFGGGGSN) is disordered. Residues 97 to 113 (PGGGSSLDYLFGGGGSN) show a composition bias toward gly residues.

The protein belongs to the SPIRAL1 family. Detected in pollen of mature flowers.

In terms of biological role, acts redundantly with SPR1 in maintaining the cortical microtubules organization essential for anisotropic cell growth. In Arabidopsis thaliana (Mouse-ear cress), this protein is Protein SPIRAL1-like 1 (SP1L1).